Here is a 108-residue protein sequence, read N- to C-terminus: UPF0145 protein AF_0869 (108 aa).

This sequence belongs to the UPF0145 family.

The protein is UPF0145 protein AF_0869 of Archaeoglobus fulgidus (strain ATCC 49558 / DSM 4304 / JCM 9628 / NBRC 100126 / VC-16).